The sequence spans 123 residues: MEPAEQPSELVSAEGRNRKAVLCQRCGSRVLQPGTALFSRRQLFLPSMRKKPALSDGSNPDGDLLQEHWLVEDMFIFENVGFTKDVGNIKFLVCADCEIGPIGWHCLDDKNSFYVALERVSHE.

An N-acetylmethionine modification is found at M1. Residues 9–123 (ELVSAEGRNR…YVALERVSHE (115 aa)) enclose the MSS4 domain. Residues C23, C26, C94, and C97 each contribute to the Zn(2+) site.

The protein belongs to the DSS4/MSS4 family. Interacts with RAB8A. Ubiquitous.

Guanine-nucleotide-releasing protein that acts on members of the SEC4/YPT1/RAB subfamily. Stimulates GDP release from both YPT1, RAB3A and RAB10, but is less active on these proteins than on the SEC4 protein. Might play a general role in vesicular transport. The polypeptide is Guanine nucleotide exchange factor MSS4 (RABIF) (Homo sapiens (Human)).